The chain runs to 278 residues: Energy-coupling factor transporter ATP-binding protein EcfA1 (278 aa).

The 236-residue stretch at 5–240 (IEVRNLKYKY…EDLEELGLDQ (236 aa)) folds into the ABC transporter domain. Residue 40-47 (GHNGSGKS) participates in ATP binding.

This sequence belongs to the ABC transporter superfamily. Energy-coupling factor EcfA family. In terms of assembly, forms a stable energy-coupling factor (ECF) transporter complex composed of 2 membrane-embedded substrate-binding proteins (S component), 2 ATP-binding proteins (A component) and 2 transmembrane proteins (T component).

Its subcellular location is the cell membrane. ATP-binding (A) component of a common energy-coupling factor (ECF) ABC-transporter complex. Unlike classic ABC transporters this ECF transporter provides the energy necessary to transport a number of different substrates. The protein is Energy-coupling factor transporter ATP-binding protein EcfA1 of Streptococcus sanguinis (strain SK36).